A 480-amino-acid chain; its full sequence is Protein nucleotidyltransferase YdiU (480 aa).

8 residues coordinate ATP: Gly-86, Gly-88, Arg-89, Lys-109, Asp-121, Gly-122, Arg-172, and Arg-179. Asp-248 serves as the catalytic Proton acceptor. 2 residues coordinate Mg(2+): Asn-249 and Asp-258. Asp-258 contacts ATP.

It belongs to the SELO family. Mg(2+) is required as a cofactor. The cofactor is Mn(2+).

It carries out the reaction L-seryl-[protein] + ATP = 3-O-(5'-adenylyl)-L-seryl-[protein] + diphosphate. The catalysed reaction is L-threonyl-[protein] + ATP = 3-O-(5'-adenylyl)-L-threonyl-[protein] + diphosphate. It catalyses the reaction L-tyrosyl-[protein] + ATP = O-(5'-adenylyl)-L-tyrosyl-[protein] + diphosphate. The enzyme catalyses L-histidyl-[protein] + UTP = N(tele)-(5'-uridylyl)-L-histidyl-[protein] + diphosphate. It carries out the reaction L-seryl-[protein] + UTP = O-(5'-uridylyl)-L-seryl-[protein] + diphosphate. The catalysed reaction is L-tyrosyl-[protein] + UTP = O-(5'-uridylyl)-L-tyrosyl-[protein] + diphosphate. Its function is as follows. Nucleotidyltransferase involved in the post-translational modification of proteins. It can catalyze the addition of adenosine monophosphate (AMP) or uridine monophosphate (UMP) to a protein, resulting in modifications known as AMPylation and UMPylation. In Salmonella paratyphi C (strain RKS4594), this protein is Protein nucleotidyltransferase YdiU.